The chain runs to 287 residues: ATP synthase subunit a (287 aa).

Transmembrane regions (helical) follow at residues 38–58 (DSMVLALLLGGLTLLILWTAA), 96–116 (FIAPLGLVVFVWVFLMNAMDM), 139–161 (VVPTADLSTTMGLALAVLGLRFW), 187–207 (PLFALILGLVNLLMQVIEYVA), 225–245 (LVFMLIALMGGAAALSLSGVL), and 259–279 (LFHILVITLQAFIFMMLALIY).

The protein belongs to the ATPase A chain family. F-type ATPases have 2 components, CF(1) - the catalytic core - and CF(0) - the membrane proton channel. CF(1) has five subunits: alpha(3), beta(3), gamma(1), delta(1), epsilon(1). CF(0) has three main subunits: a(1), b(2) and c(9-12). The alpha and beta chains form an alternating ring which encloses part of the gamma chain. CF(1) is attached to CF(0) by a central stalk formed by the gamma and epsilon chains, while a peripheral stalk is formed by the delta and b chains.

The protein localises to the cell inner membrane. Key component of the proton channel; it plays a direct role in the translocation of protons across the membrane. This Verminephrobacter eiseniae (strain EF01-2) protein is ATP synthase subunit a.